The following is a 549-amino-acid chain: Undecaprenyl phosphate-alpha-4-amino-4-deoxy-L-arabinose arabinosyl transferase 2 (549 aa).

Helical transmembrane passes span 9-29 (LLLG…GLWI), 80-102 (LFGV…FLIA), 112-132 (SFVC…AGYA), 133-153 (NLDP…WFAL), 176-196 (FMTK…PWML), 204-224 (LLLY…PWAL), 259-279 (FYLP…PVAF), 290-310 (GIAF…LSNG), 312-332 (LPTY…HALA), 342-362 (ALGL…IGLV), 377-397 (SLVL…LQAF), and 402-422 (CWAA…AALP).

This sequence belongs to the glycosyltransferase 83 family.

The protein resides in the cell inner membrane. The enzyme catalyses 4-amino-4-deoxy-alpha-L-arabinopyranosyl di-trans,octa-cis-undecaprenyl phosphate + lipid IVA = lipid IIA + di-trans,octa-cis-undecaprenyl phosphate.. The protein operates within lipopolysaccharide metabolism; 4-amino-4-deoxy-beta-L-arabinose-lipid A biosynthesis. Its function is as follows. Catalyzes the transfer of the L-Ara4N moiety of the glycolipid undecaprenyl phosphate-alpha-L-Ara4N to lipid A. The modified arabinose is attached to lipid A and is required for resistance to polymyxin and cationic antimicrobial peptides. This is Undecaprenyl phosphate-alpha-4-amino-4-deoxy-L-arabinose arabinosyl transferase 2 from Pseudomonas fluorescens (strain Pf0-1).